The primary structure comprises 246 residues: Small ribosomal subunit protein uS3 (246 aa).

In terms of domain architecture, KH type-2 spans 38 to 106 (IRQYLNARLA…DVQINIYEIR (69 aa)). The disordered stretch occupies residues 218–246 (VAKNQSRRPNAQGGNNRGGDRNRRRKGNR).

It belongs to the universal ribosomal protein uS3 family. Part of the 30S ribosomal subunit. Forms a tight complex with proteins S10 and S14.

Binds the lower part of the 30S subunit head. Binds mRNA in the 70S ribosome, positioning it for translation. The protein is Small ribosomal subunit protein uS3 of Porphyromonas gingivalis (strain ATCC 33277 / DSM 20709 / CIP 103683 / JCM 12257 / NCTC 11834 / 2561).